Here is a 563-residue protein sequence, read N- to C-terminus: Arginine--tRNA ligase (563 aa).

A 'HIGH' region motif is present at residues 123 to 133 (PNIAKDMHVGH).

The protein belongs to the class-I aminoacyl-tRNA synthetase family. In terms of assembly, monomer.

The protein localises to the cytoplasm. It catalyses the reaction tRNA(Arg) + L-arginine + ATP = L-arginyl-tRNA(Arg) + AMP + diphosphate. This is Arginine--tRNA ligase (argS) from Chlamydia trachomatis serovar D (strain ATCC VR-885 / DSM 19411 / UW-3/Cx).